We begin with the raw amino-acid sequence, 229 residues long: Demethylmenaquinone methyltransferase (229 aa).

S-adenosyl-L-methionine-binding positions include threonine 62, aspartate 80, 100-101 (DG), and serine 117.

Belongs to the class I-like SAM-binding methyltransferase superfamily. MenG/UbiE family.

The catalysed reaction is a 2-demethylmenaquinol + S-adenosyl-L-methionine = a menaquinol + S-adenosyl-L-homocysteine + H(+). Its pathway is quinol/quinone metabolism; menaquinone biosynthesis; menaquinol from 1,4-dihydroxy-2-naphthoate: step 2/2. In terms of biological role, methyltransferase required for the conversion of demethylmenaquinol (DMKH2) to menaquinol (MKH2). This chain is Demethylmenaquinone methyltransferase, found in Corynebacterium kroppenstedtii (strain DSM 44385 / JCM 11950 / CIP 105744 / CCUG 35717).